We begin with the raw amino-acid sequence, 969 residues long: MSFALGQRWISDTESDLGLGTVVAVDDRTVSLLFAASEENRLYAKHDAPVTRVMFNKGDTIESHEGWSLDVEDVIEEGGLLTYIGTRVDTDEANVVLRETLLSHQIRFNKPQDKLFAGQIDRMDRFALRFRALQNQYEQHKSPMRGLCGMRAGLIPHQLFIAHEVGRRYAPRVLLADEVGLGKTIEAGMIIHQQVLSGRAERVLIVVPETLQHQWLVEMMRRFNLHFSIFDEERCVEAYADSENPFDTAQFVLCSLDFIRKSKRRFEQVVEADWDLLVVDEAHHLEWNQTKPSREYQVIEAIAEETPGVLLLTATPEQLGHESHFARLRLLDPDRFYDYDAFVEEERQYQPVADAVTALMSGEKLSNDAKNRITELLSEQDVEPLFRIIESSAAEDEQAQARQELVDNLMDRHGTGRVLFRNTRAAIKGFPQRNLNLMPMPLPSQYATSMRVATMMGGRMTDEARAMKMLYPEEIFQEFEGDSATWWQFDPRVNWLLELLKENRNEKVLIIASRASTALQLEQALREREGIRGTVFHEGMSIIERDKAAAYFAQEEGGAQVLICSEIGSEGRNFQFANQLVMFDLPFNPDLLEQRIGRLDRIGQKRDIEIHVPYLQGTSQELLARWFDEGLNAFGETCPTGRAVYDKFADAIIAILATGKSDGLESLIEESAALNKSLKAQLEQGRDRLLEVHSNGGDKAKEIAEQIAATDGDTNLVNFALNLFDTIGLNQDDKGENAIVVTPAENMLVSSYPGLPYEGCTITFDRETALSREDMNLISWEHPMIQGGIDLVLTEGVGATAVSLLKNKALPAGTLLLELVYVVDAQAPKQSGIARFLPKTPIRIMMDGKGNDLSAQVEFESFNRQLSPVNRHMASKLVNSVQKEIHGLIDKAEISMEERLESVRTDAEKEMKAALNSELERLQALKAVNPNIRDEELTQIETQMSELSGYIGKAQVQLDSLRLIVVSHN.

Residues 164-334 (EVGRRYAPRV…FARLRLLDPD (171 aa)) enclose the Helicase ATP-binding domain. 177-184 (DEVGLGKT) serves as a coordination point for ATP. Residues 280–283 (DEAH) carry the DEAH box motif. Positions 492 to 668 (RVNWLLELLK…GKSDGLESLI (177 aa)) constitute a Helicase C-terminal domain.

The protein belongs to the SNF2/RAD54 helicase family. RapA subfamily. Interacts with the RNAP. Has a higher affinity for the core RNAP than for the holoenzyme. Its ATPase activity is stimulated by binding to RNAP.

Functionally, transcription regulator that activates transcription by stimulating RNA polymerase (RNAP) recycling in case of stress conditions such as supercoiled DNA or high salt concentrations. Probably acts by releasing the RNAP, when it is trapped or immobilized on tightly supercoiled DNA. Does not activate transcription on linear DNA. Probably not involved in DNA repair. In Aliivibrio fischeri (strain MJ11) (Vibrio fischeri), this protein is RNA polymerase-associated protein RapA.